A 497-amino-acid chain; its full sequence is MKSSTIPPMYAAIDLGSNSFHMLVVRHINGSVQTMAKIKRKVRLAAGLNENNTLSHEAMQRGWDCLSLFAERLQDIPVENIRIVGTATLRVASNVDIFLEKANQILGHNINVIEGEEEARMIYQGVAHTSGGNGRRLVVDIGGASTELIIGEGFEAQALTSLKMGCVTWLEGYFKDRALTQKNFDSAIAGAKETLAPILQQYTDLGWQTCVGASGTVQALQEIMLAQGMDEVITLAKLKRLQKQAMQYEHLEELDIDGLTLERALVFPSGLSILIAIFELLNIDSMTLAGGALREGLCYGMIDELQHDEVCQRTIKSTQQRYQLDVEYAQQVTDLSIQLVQQCGNDWLTEPQALPLLTAATQLHEIGMCIDYKKGGEHSAYLINALDLPGFTRAQKHLLGELLRRYREYFSAMPTQHAVSDISAQRMLRILRLAIILTHRRDVNLAPAVTLSEKNDVLSLSIDGTWLAANPLTRSELEIEADKQTNIGWDLVIDARD.

The protein belongs to the GppA/Ppx family. GppA subfamily.

The catalysed reaction is guanosine 3'-diphosphate 5'-triphosphate + H2O = guanosine 3',5'-bis(diphosphate) + phosphate + H(+). It functions in the pathway purine metabolism; ppGpp biosynthesis; ppGpp from GTP: step 2/2. In terms of biological role, catalyzes the conversion of pppGpp to ppGpp. Guanosine pentaphosphate (pppGpp) is a cytoplasmic signaling molecule which together with ppGpp controls the 'stringent response', an adaptive process that allows bacteria to respond to amino acid starvation, resulting in the coordinated regulation of numerous cellular activities. This Aliivibrio fischeri (strain MJ11) (Vibrio fischeri) protein is Guanosine-5'-triphosphate,3'-diphosphate pyrophosphatase.